The primary structure comprises 153 residues: Two-component response regulator ARR17 (153 aa).

Residues 21-149 (HVLAVDDNLI…DVEKLKCHLL (129 aa)) form the Response regulatory domain. At Asp-82 the chain carries 4-aspartylphosphate.

Belongs to the ARR family. Type-A subfamily. In terms of processing, two-component system major event consists of a His-to-Asp phosphorelay between a sensor histidine kinase (HK) and a response regulator (RR). In plants, the His-to-Asp phosphorelay involves an additional intermediate named Histidine-containing phosphotransfer protein (HPt). This multistep phosphorelay consists of a His-Asp-His-Asp sequential transfer of a phosphate group between first a His and an Asp of the HK protein, followed by the transfer to a conserved His of the HPt protein and finally the transfer to an Asp in the receiver domain of the RR protein.

It localises to the nucleus. Its function is as follows. Functions as a response regulator involved in His-to-Asp phosphorelay signal transduction system. Phosphorylation of the Asp residue in the receiver domain activates the ability of the protein to promote the transcription of target genes. Type-A response regulators seem to act as negative regulators of the cytokinin signaling. The polypeptide is Two-component response regulator ARR17 (ARR17) (Arabidopsis thaliana (Mouse-ear cress)).